We begin with the raw amino-acid sequence, 395 residues long: Argininosuccinate synthase (395 aa).

ATP contacts are provided by residues 10-18 and alanine 37; that span reads AYSGGLDTS. L-citrulline contacts are provided by tyrosine 88 and serine 93. Glycine 118 is an ATP binding site. L-aspartate is bound by residues threonine 120, asparagine 124, and aspartate 125. Asparagine 124 lines the L-citrulline pocket. L-citrulline contacts are provided by arginine 128, serine 179, serine 188, glutamate 264, and tyrosine 276.

Belongs to the argininosuccinate synthase family. Type 1 subfamily. In terms of assembly, homotetramer.

Its subcellular location is the cytoplasm. The enzyme catalyses L-citrulline + L-aspartate + ATP = 2-(N(omega)-L-arginino)succinate + AMP + diphosphate + H(+). Its pathway is amino-acid biosynthesis; L-arginine biosynthesis; L-arginine from L-ornithine and carbamoyl phosphate: step 2/3. The chain is Argininosuccinate synthase from Pelagibacter ubique (strain HTCC1062).